A 116-amino-acid polypeptide reads, in one-letter code: Large ribosomal subunit protein bL17 (116 aa).

It belongs to the bacterial ribosomal protein bL17 family. Part of the 50S ribosomal subunit. Contacts protein L32.

The protein is Large ribosomal subunit protein bL17 of Wolinella succinogenes (strain ATCC 29543 / DSM 1740 / CCUG 13145 / JCM 31913 / LMG 7466 / NCTC 11488 / FDC 602W) (Vibrio succinogenes).